A 1132-amino-acid polypeptide reads, in one-letter code: Protein sel-1 homolog 3 (1132 aa).

A disordered region spans residues 1 to 24; the sequence is MQRRGAGLGWPRQQQQQPPPLAVG. N-linked (GlcNAc...) asparagine glycans are attached at residues asparagine 201, asparagine 382, and asparagine 527. Sel1-like repeat units follow at residues 575 to 609, 611 to 647, 694 to 730, 732 to 767, 768 to 800, 801 to 839, and 840 to 877; these read YLAV…RLSS, NLGY…DQHT, RLAQ…PALI, DYAI…QAVN, GLGW…DASY, NLGV…EGTL, and WCSL…LGHV. Serine 608 carries the post-translational modification Phosphoserine. Asparagine 937 carries an N-linked (GlcNAc...) asparagine glycan. The Sel1-like 8 repeat unit spans residues 952–988; the sequence is KMGDLYYYGHQNQSQDLELSVQMYAQAALDGDSQGFF. A helical transmembrane segment spans residues 1057–1077; sequence ILHSALIYFLGTFLLSILIAW. The tract at residues 1087 to 1132 is disordered; that stretch reads ASDPPPRPSQASPDTATSTASPAVTPAADASDQDQPTVTNNPEPRG. Residues 1097–1116 are compositionally biased toward low complexity; it reads ASPDTATSTASPAVTPAADA. The span at 1119 to 1132 shows a compositional bias: polar residues; it reads QDQPTVTNNPEPRG.

The protein resides in the membrane. The protein is Protein sel-1 homolog 3 (SEL1L3) of Homo sapiens (Human).